Consider the following 159-residue polypeptide: 2-C-methyl-D-erythritol 2,4-cyclodiphosphate synthase (159 aa).

Residues Asp10 and His12 each contribute to the a divalent metal cation site. Residues 10 to 12 (DVH) and 36 to 37 (HS) contribute to the 4-CDP-2-C-methyl-D-erythritol 2-phosphate site. His44 contacts a divalent metal cation. 4-CDP-2-C-methyl-D-erythritol 2-phosphate is bound by residues 58-60 (DIG), 63-67 (FPDTD), 102-108 (AQAPKMA), 134-137 (TTTE), Phe141, and Arg144.

The protein belongs to the IspF family. Homotrimer. A divalent metal cation serves as cofactor.

The enzyme catalyses 4-CDP-2-C-methyl-D-erythritol 2-phosphate = 2-C-methyl-D-erythritol 2,4-cyclic diphosphate + CMP. Its pathway is isoprenoid biosynthesis; isopentenyl diphosphate biosynthesis via DXP pathway; isopentenyl diphosphate from 1-deoxy-D-xylulose 5-phosphate: step 4/6. In terms of biological role, involved in the biosynthesis of isopentenyl diphosphate (IPP) and dimethylallyl diphosphate (DMAPP), two major building blocks of isoprenoid compounds. Catalyzes the conversion of 4-diphosphocytidyl-2-C-methyl-D-erythritol 2-phosphate (CDP-ME2P) to 2-C-methyl-D-erythritol 2,4-cyclodiphosphate (ME-CPP) with a corresponding release of cytidine 5-monophosphate (CMP). This chain is 2-C-methyl-D-erythritol 2,4-cyclodiphosphate synthase, found in Shewanella halifaxensis (strain HAW-EB4).